Reading from the N-terminus, the 234-residue chain is Mediator of RNA polymerase II transcription subunit 4 (234 aa).

Positions 71-124 form a coiled coil; sequence HQEAYRRLVEKKNEVAGLEMRVRGLVKRLEEGRKELEGMIDQGERSLEDIQKSE. Residues 188-234 form a disordered region; it reads GVVGEEQKAPQKVEERREHVEHEESGRRYDPNAVFQLDLNSDESDED. Residues 189-217 show a composition bias toward basic and acidic residues; that stretch reads VVGEEQKAPQKVEERREHVEHEESGRRYD.

Belongs to the Mediator complex subunit 4 family. As to quaternary structure, component of the Mediator complex.

The protein localises to the nucleus. Component of the Mediator complex, a coactivator involved in the regulated transcription of nearly all RNA polymerase II-dependent genes. Mediator functions as a bridge to convey information from gene-specific regulatory proteins to the basal RNA polymerase II transcription machinery. Mediator is recruited to promoters by direct interactions with regulatory proteins and serves as a scaffold for the assembly of a functional preinitiation complex with RNA polymerase II and the general transcription factors. This Cryptococcus neoformans var. neoformans serotype D (strain B-3501A) (Filobasidiella neoformans) protein is Mediator of RNA polymerase II transcription subunit 4 (MED4).